The sequence spans 538 residues: Calcium-dependent protein kinase 8 (538 aa).

The interval 1 to 26 (MGNCCGTPATAEEGGKRRRRGKQKKA) is disordered. Gly-2 carries the N-myristoyl glycine lipid modification. Basic residues predominate over residues 16–25 (KRRRRGKQKK). Residues 64–322 (YELGGELGRG…AEQVLEHPWL (259 aa)) enclose the Protein kinase domain. Residues 70–78 (LGRGEFGIT) and Lys-93 each bind ATP. The active-site Proton acceptor is Asp-188. Positions 328–358 (MPDIPLGDAVRARLQQFAAMNKLKKKALKVI) are autoinhibitory domain. 4 consecutive EF-hand domains span residues 365–400 (EEAA…LGNQ), 401–436 (MPDS…VRKI), 437–472 (GNDE…EIDG), and 473–508 (NDED…GTDW). Ca(2+) is bound by residues Asp-378, Ser-380, Asn-382, Gln-384, Asp-389, Asp-414, Asp-416, Asn-418, Glu-425, Asp-450, Asn-452, Ser-454, Tyr-456, Glu-461, Asp-486, Asp-488, Asp-490, Lys-492, and Glu-497.

Belongs to the protein kinase superfamily. Ser/Thr protein kinase family. CDPK subfamily.

It is found in the membrane. It catalyses the reaction L-seryl-[protein] + ATP = O-phospho-L-seryl-[protein] + ADP + H(+). It carries out the reaction L-threonyl-[protein] + ATP = O-phospho-L-threonyl-[protein] + ADP + H(+). With respect to regulation, activated by calcium. Autophosphorylation may play an important role in the regulation of the kinase activity. Functionally, may play a role in signal transduction pathways that involve calcium as a second messenger. The protein is Calcium-dependent protein kinase 8 of Oryza sativa subsp. japonica (Rice).